The primary structure comprises 145 residues: Large ribosomal subunit protein uL13 (145 aa).

This sequence belongs to the universal ribosomal protein uL13 family. In terms of assembly, part of the 50S ribosomal subunit.

Its function is as follows. This protein is one of the early assembly proteins of the 50S ribosomal subunit, although it is not seen to bind rRNA by itself. It is important during the early stages of 50S assembly. This Bacillus mycoides (strain KBAB4) (Bacillus weihenstephanensis) protein is Large ribosomal subunit protein uL13.